Consider the following 73-residue polypeptide: U3-agatoxin-Ao1k (73 aa).

Positions 1 to 20 are cleaved as a signal peptide; the sequence is MRTIISLLLLSAMVFAVIEA. The propeptide occupies 21 to 34; sequence ISLEEGLQLFEGER. Cystine bridges form between cysteine 36-cysteine 52, cysteine 43-cysteine 57, cysteine 51-cysteine 67, and cysteine 59-cysteine 65. Serine 71 bears the Serine amide mark.

The protein belongs to the neurotoxin 07 (Beta/delta-agtx) family. 03 (aga-4) subfamily. Aga sub-subfamily. As to expression, expressed by the venom gland.

Its subcellular location is the secreted. In terms of biological role, insecticidal neurotoxin that modulates the insect Nav channel (DmNaV1/tipE (para/tipE)) in a unique manner, with both the activation and inactivation processes being affected. The voltage dependence of activation is shifted toward more hyperpolarized potentials (analogous to site 4 toxins) and a non-inactivating persistent sodium current is induced (site 3-like action). Interestingly, both effects take place in a voltage-dependent manner, producing a bell-shaped curve between -80 and 0 mV. Compared to beta/delta-agatoxin-1 to -3, this toxin appears to affect the insect sodium channel only weakly. This Agelena orientalis (Funnel-web spider) protein is U3-agatoxin-Ao1k.